Reading from the N-terminus, the 249-residue chain is 2,3-bisphosphoglycerate-dependent phosphoglycerate mutase (249 aa).

Substrate contacts are provided by residues 9–16 (RHGQSQWN), 22–23 (TG), Arg-61, 88–91 (ERHY), Lys-99, 115–116 (RR), and 184–185 (GN). His-10 (tele-phosphohistidine intermediate) is an active-site residue. Catalysis depends on Glu-88, which acts as the Proton donor/acceptor.

This sequence belongs to the phosphoglycerate mutase family. BPG-dependent PGAM subfamily. In terms of assembly, homodimer.

The enzyme catalyses (2R)-2-phosphoglycerate = (2R)-3-phosphoglycerate. The protein operates within carbohydrate degradation; glycolysis; pyruvate from D-glyceraldehyde 3-phosphate: step 3/5. Catalyzes the interconversion of 2-phosphoglycerate and 3-phosphoglycerate. The sequence is that of 2,3-bisphosphoglycerate-dependent phosphoglycerate mutase from Xanthomonas oryzae pv. oryzae (strain PXO99A).